A 126-amino-acid chain; its full sequence is Fumarate reductase subunit C (126 aa).

3 consecutive transmembrane segments (helical) span residues 30–50, 64–84, and 105–125; these read IFVA…GAGG, VVVV…VTWF, and VLAG…WMVL.

This sequence belongs to the FrdC family. As to quaternary structure, part of an enzyme complex containing four subunits: a flavoprotein (FrdA), an iron-sulfur protein (FrdB), and two hydrophobic anchor proteins (FrdC and FrdD).

Its subcellular location is the cell membrane. Functionally, anchors the catalytic components of the fumarate reductase complex to the cell membrane, binds quinones. In Mycobacterium tuberculosis (strain CDC 1551 / Oshkosh), this protein is Fumarate reductase subunit C.